The primary structure comprises 193 residues: ATP-dependent Clp protease proteolytic subunit (193 aa).

S98 functions as the Nucleophile in the catalytic mechanism. H123 is a catalytic residue.

It belongs to the peptidase S14 family. In terms of assembly, fourteen ClpP subunits assemble into 2 heptameric rings which stack back to back to give a disk-like structure with a central cavity, resembling the structure of eukaryotic proteasomes.

The protein resides in the cytoplasm. It carries out the reaction Hydrolysis of proteins to small peptides in the presence of ATP and magnesium. alpha-casein is the usual test substrate. In the absence of ATP, only oligopeptides shorter than five residues are hydrolyzed (such as succinyl-Leu-Tyr-|-NHMec, and Leu-Tyr-Leu-|-Tyr-Trp, in which cleavage of the -Tyr-|-Leu- and -Tyr-|-Trp bonds also occurs).. Its function is as follows. Cleaves peptides in various proteins in a process that requires ATP hydrolysis. Has a chymotrypsin-like activity. Plays a major role in the degradation of misfolded proteins. The sequence is that of ATP-dependent Clp protease proteolytic subunit from Clostridium acetobutylicum (strain ATCC 824 / DSM 792 / JCM 1419 / IAM 19013 / LMG 5710 / NBRC 13948 / NRRL B-527 / VKM B-1787 / 2291 / W).